The following is a 207-amino-acid chain: Urease accessory protein UreG (207 aa).

Residue 13-20 participates in GTP binding; sequence GPVGSGKT.

The protein belongs to the SIMIBI class G3E GTPase family. UreG subfamily. In terms of assembly, homodimer. UreD, UreF and UreG form a complex that acts as a GTP-hydrolysis-dependent molecular chaperone, activating the urease apoprotein by helping to assemble the nickel containing metallocenter of UreC. The UreE protein probably delivers the nickel.

The protein localises to the cytoplasm. Its function is as follows. Facilitates the functional incorporation of the urease nickel metallocenter. This process requires GTP hydrolysis, probably effectuated by UreG. This Azoarcus sp. (strain BH72) protein is Urease accessory protein UreG.